Reading from the N-terminus, the 275-residue chain is Large ribosomal subunit protein uL2c (275 aa).

Residues 28–53 (TPTKSLTHANHRARGRNHSGSITTRW) form a disordered region.

Belongs to the universal ribosomal protein uL2 family. Part of the 50S ribosomal subunit.

Its subcellular location is the plastid. The protein resides in the chloroplast. The chain is Large ribosomal subunit protein uL2c (rpl2) from Nephroselmis olivacea (Green alga).